The chain runs to 392 residues: L-rhamnonate dehydratase (392 aa).

2 residues coordinate substrate: H22 and R48. The Mg(2+) site is built by D214, E240, and E268. H318 serves as the catalytic Proton acceptor. E338 is a binding site for substrate.

Belongs to the mandelate racemase/muconate lactonizing enzyme family. RhamD subfamily. In terms of assembly, homooctamer; tetramer of dimers. Requires Mg(2+) as cofactor.

It catalyses the reaction L-rhamnonate = 2-dehydro-3-deoxy-L-rhamnonate + H2O. Functionally, catalyzes the dehydration of L-rhamnonate to 2-keto-3-deoxy-L-rhamnonate (KDR). This is L-rhamnonate dehydratase from Paraburkholderia phymatum (strain DSM 17167 / CIP 108236 / LMG 21445 / STM815) (Burkholderia phymatum).